A 268-amino-acid polypeptide reads, in one-letter code: 4-hydroxy-tetrahydrodipicolinate reductase (268 aa).

Residues 7–12 and glutamate 33 each bind NAD(+); that span reads GAGGRM. Residue arginine 34 participates in NADP(+) binding. NAD(+) contacts are provided by residues 97-99 and 121-124; these read GTT and SGNM. The active-site Proton donor/acceptor is histidine 155. Histidine 156 is a (S)-2,3,4,5-tetrahydrodipicolinate binding site. Lysine 159 functions as the Proton donor in the catalytic mechanism. 165 to 166 lines the (S)-2,3,4,5-tetrahydrodipicolinate pocket; sequence GT.

The protein belongs to the DapB family.

It localises to the cytoplasm. The catalysed reaction is (S)-2,3,4,5-tetrahydrodipicolinate + NAD(+) + H2O = (2S,4S)-4-hydroxy-2,3,4,5-tetrahydrodipicolinate + NADH + H(+). It catalyses the reaction (S)-2,3,4,5-tetrahydrodipicolinate + NADP(+) + H2O = (2S,4S)-4-hydroxy-2,3,4,5-tetrahydrodipicolinate + NADPH + H(+). It functions in the pathway amino-acid biosynthesis; L-lysine biosynthesis via DAP pathway; (S)-tetrahydrodipicolinate from L-aspartate: step 4/4. Catalyzes the conversion of 4-hydroxy-tetrahydrodipicolinate (HTPA) to tetrahydrodipicolinate. This Brucella melitensis biotype 1 (strain ATCC 23456 / CCUG 17765 / NCTC 10094 / 16M) protein is 4-hydroxy-tetrahydrodipicolinate reductase.